The sequence spans 56 residues: Ovomucoid (56 aa).

The Kazal-like domain maps to Val-6–Cys-56. Intrachain disulfides connect Cys-8–Cys-38, Cys-16–Cys-35, and Cys-24–Cys-56. Asn-45 carries N-linked (GlcNAc...) asparagine glycosylation.

The protein localises to the secreted. In Meleagris ocellata (Ocellated turkey), this protein is Ovomucoid.